Reading from the N-terminus, the 159-residue chain is Ribonuclease H (159 aa).

One can recognise an RNase H type-1 domain in the interval 8 to 150; it reads NLKEITMYTD…CDQLAVAAAK (143 aa). Asp-17, Glu-55, Asp-77, and Asp-142 together coordinate Mg(2+).

Belongs to the RNase H family. Monomer. Mg(2+) is required as a cofactor.

It localises to the cytoplasm. The enzyme catalyses Endonucleolytic cleavage to 5'-phosphomonoester.. Its function is as follows. Endonuclease that specifically degrades the RNA of RNA-DNA hybrids. This Desulforamulus reducens (strain ATCC BAA-1160 / DSM 100696 / MI-1) (Desulfotomaculum reducens) protein is Ribonuclease H.